Consider the following 207-residue polypeptide: Mediator of RNA polymerase II transcription subunit 21 (207 aa).

Residues 36-120 (IPPPDVPDAA…APDSPRTFAS (85 aa)) are disordered. Over residues 91 to 108 (GEGAQTPGPAAGAGADPN) the composition is skewed to low complexity. The stretch at 146–194 (IDSSEAEQEKRIRELEGELRQVEEERELKMRELKRLRRTLENVLTAVET) forms a coiled coil.

This sequence belongs to the Mediator complex subunit 21 family. Component of the Mediator complex.

The protein localises to the nucleus. In terms of biological role, component of the Mediator complex, a coactivator involved in the regulated transcription of nearly all RNA polymerase II-dependent genes. Mediator functions as a bridge to convey information from gene-specific regulatory proteins to the basal RNA polymerase II transcription machinery. Mediator is recruited to promoters by direct interactions with regulatory proteins and serves as a scaffold for the assembly of a functional preinitiation complex with RNA polymerase II and the general transcription factors. The sequence is that of Mediator of RNA polymerase II transcription subunit 21 (srb7) from Aspergillus fumigatus (strain ATCC MYA-4609 / CBS 101355 / FGSC A1100 / Af293) (Neosartorya fumigata).